A 1396-amino-acid polypeptide reads, in one-letter code: Melanoma inhibitory activity protein 2 (1396 aa).

Positions 1 to 22 (MAEVSVQRILLLVVSLAKCLEG) are cleaved as a signal peptide. The Lumenal segment spans residues 23-604 (TKLLAHLKKC…YGFMSSALSP (582 aa)). Residues 39-101 (TLISRVLALR…PRDAVEIEEV (63 aa)) form the SH3 domain. Residue asparagine 59 is glycosylated (N-linked (GlcNAc...) asparagine). Disordered regions lie at residues 197 to 288 (EGAG…VPDE) and 331 to 361 (ESNPPLQDIPSSVPPDEEVPAPCREISTDKE). The span at 243–258 (SDTEPTQELALEEESD) shows a compositional bias: acidic residues. Asparagine 366 is a glycosylation site (N-linked (GlcNAc...) asparagine). Disordered stretches follow at residues 396–421 (DKGENEDGEVDNLKHPIGSDFDPEKE) and 525–557 (PMEEHEGVHFKPSSSKRNEDDSNSWADPEELSV). The stretch at 605–625 (IEILLESVVAALPEDMRADFN) is an intramembrane region. Residues 626–628 (PSG) are Lumenal-facing. Residues 629–649 (FSLELAVCVLSVGLLAVVLFL) traverse the membrane as a helical segment. Over 650–1396 (WRGFRSIRSR…AADPPETQEA (747 aa)) the chain is Cytoplasmic. A mediates interaction with MIA3 region spans residues 651 to 1243 (RGFRSIRSRF…RSYNMPSLDK (593 aa)). 2 coiled-coil regions span residues 693-867 (YEGL…LVTS) and 914-1082 (AAKL…NRQK). The disordered stretch occupies residues 1103 to 1396 (PNTAFGREHS…AADPPETQEA (294 aa)). The proline-rich domain (PRD); probably mediates interaction with COPII coat subunits stretch occupies residues 1105–1396 (TAFGREHSPY…AADPPETQEA (292 aa)). Residues 1135 to 1146 (LLEGPLRLSPLL) are compositionally biased toward low complexity. Basic and acidic residues predominate over residues 1165–1179 (MNTERGESSYDRLSD). Residues 1252–1269 (MESSGNGTKDNLGNSNVP) are compositionally biased toward polar residues. Composition is skewed to pro residues over residues 1331-1342 (RDFPGPPLPPFP) and 1351-1368 (GFPPYLPPRAGFFPPPPH).

The protein belongs to the MIA/OTOR family. As to quaternary structure, interacts with MIA3. Interacts with the COPII coat subunits SEC23A, SEC23B and maybe SEC24C. Interacts with PREB; recruits PREB to endoplasmic reticulum exit sites. Interacts with APOB. As to expression, isoform 1 is expressed in liver (at protein level). Isoform 2 is highly expressed in liver and weakly in testis.

Its subcellular location is the endoplasmic reticulum membrane. Its function is as follows. Plays a role in the transport of cargos that are too large to fit into COPII-coated vesicles and require specific mechanisms to be incorporated into membrane-bound carriers and exported from the endoplasmic reticulum. Plays a role in the secretion of lipoproteins, pre-chylomicrons and pre-VLDLs, by participating in their export from the endoplasmic reticulum. Thereby, may play a role in cholesterol and triglyceride homeostasis. Required for collagen VII (COL7A1) secretion by loading COL7A1 into transport carriers and recruiting PREB/SEC12 at the endoplasmic reticulum exit sites. The chain is Melanoma inhibitory activity protein 2 from Mus musculus (Mouse).